The primary structure comprises 630 residues: MANSGTGAPPPLLLLPLLLLLGTGLLPASSHIETRAHAEERLLKRLFSGYNKWSRPVANISDVVLVRFGLSIAQLIDVDEKNQMMTTNVWVKQEWHDYKLRWDPGDYENVTSIRIPSELIWRPDIVLYNNADGDFAVTHLTKAHLFYDGRVQWTPPAIYKSSCSIDVTFFPFDQQNCTMKFGSWTYDKAKIDLVSMHSRVDQLDFWESGEWVIVDAVGTYNTRKYECCAEIYPDITYAFIIRRLPLFYTINLIIPCLLISCLTVLVFYLPSECGEKVTLCISVLLSLTVFLLLITEIIPSPTSLVIPLIGEYLLFTMIFVTLSIVITVFVLNVHHRSPRTHTMPAWVRRVFLDIVPRLLFMKRPSVVKDNCRRLIESMHKMANAPRFWPEPVGEPGILSDICNQGLSPAPTFCNPTDTAVETQPTCRSPPLEVPDLKTSEVEKASPCPSPGSCPPPKSSSGAPMLIKARSLSVQHVPSSQEAAEDGIRCRSRSIQYCVSQDGAASLADSKPTSSPTSLKARPSQLPVSDQASPCKCTCKEPSPVSPVTVLKAGGTKAPPQHLPLSPALTRAVEGVQYIADHLKAEDTDFSVKEDWKYVAMVIDRIFLWMFIIVCLLGTVGLFLPPWLAAC.

The N-terminal stretch at 1-30 (MANSGTGAPPPLLLLPLLLLLGTGLLPASS) is a signal peptide. Residues 32 to 249 (IETRAHAEER…IIRRLPLFYT (218 aa)) are Extracellular-facing. N59 is a glycosylation site (N-linked (GlcNAc...) asparagine). Positions 78 and 80 each coordinate Ca(2+). N109 and N176 each carry an N-linked (GlcNAc...) asparagine glycan. Intrachain disulfides connect C163/C177 and C227/C228. The helical transmembrane segment at 250 to 270 (INLIIPCLLISCLTVLVFYLP) threads the bilayer. A lipid anchor (S-palmitoyl cysteine) is attached at C273. 2 consecutive transmembrane segments (helical) span residues 279–299 (LCIS…EIIP) and 313–333 (LLFT…VLNV). The Cytoplasmic portion of the chain corresponds to 334 to 604 (HHRSPRTHTM…WKYVAMVIDR (271 aa)). 2 disordered regions span residues 418 to 463 (TAVE…SGAP) and 505 to 526 (SLAD…SQLP). S428 is modified (phosphoserine). A compositionally biased stretch (basic and acidic residues) spans 434–443 (PDLKTSEVEK). Positions 447–457 (CPSPGSCPPPK) are enriched in pro residues. Phosphoserine occurs at positions 542 and 545. The helical transmembrane segment at 605–625 (IFLWMFIIVCLLGTVGLFLPP) threads the bilayer.

It belongs to the ligand-gated ion channel (TC 1.A.9) family. Acetylcholine receptor (TC 1.A.9.1) subfamily. Alpha-4/CHRNA4 sub-subfamily. In terms of assembly, neuronal AChR is composed of two different types of subunits: alpha and beta. CHRNA4 forms heteropentameric neuronal acetylcholine receptors with CHRNB2 and CHRNB4, as well as CHRNA5 and CHRNB3 as accesory subunits. Found in two major stoichiometric forms, LS (low agonist sensitivity): (CHRNA4)3:(CHRNB2)2 and HS (high agonist sensitivity): (CHRNA4)2:(CHRNB2)3, the two stoichiometric forms differ in their unitary conductance, calcium permeability, ACh sensitivity and potentiation by divalent cation. Cells produce predominantly an (CHRNA4)3:(CHRNB2)2 nAChR. The (CHRNA4)2:(CHRNB2)3 expression is selectively up-regulated by nicotine and has lower single channel conductance and calcium permeability. In the striatum, also forms CHRNA4:CHRNA6:CHRNB2 complexes. Also found in the stoichiometric form: (CHRNA4:CHRNB2)2:CHRNB3. Interacts with RIC3; which is required for proper folding and assembly. Interacts with LYPD6. In terms of tissue distribution, in various regions of the central nervous system. Expressed in hippocampal neurons.

It is found in the presynaptic cell membrane. Its subcellular location is the cell membrane. The catalysed reaction is Ca(2+)(in) = Ca(2+)(out). The enzyme catalyses K(+)(in) = K(+)(out). It catalyses the reaction Na(+)(in) = Na(+)(out). With respect to regulation, activated by a myriad of ligands such as acetylcholine, cytisine, nicotine, choline and epibatidine. Channel potentiation by calcium is stoichiometry-selective, CHRNA4:CHRNB2 nACh receptor is achieved by calcium association with topographically distinct sites framed by anionic residues within the CHRNA4 subunit and between the CHRNA4 and CHRNB2 subunits. nAChR activity is inhibited by the antagonist alpha-conotoxins BuIA, PnIA, GID and MII, small disulfide-constrained peptides from cone snails. Component of neuronal acetylcholine receptors (nAChRs) that function as pentameric, ligand-gated cation channels with high calcium permeability among other activities. nAChRs are excitatory neurotrasnmitter receptors formed by a collection of nAChR subunits known to mediate synaptic transmission in the nervous system and the neuromuscular junction. Each nAchR subunit confers differential attributes to channel properties, including activation, deactivation and desensitization kinetics, pH sensitivity, cation permeability, and binding to allosteric modulators. CHRNA4 forms heteropentameric neuronal acetylcholine receptors with CHRNB2 and CHRNB4, as well as CHRNA5 and CHRNB3 as accesory subunits. Is the most abundant nAChR subtype expressed in the central nervous system. Found in two major stoichiometric forms,(CHRNA4)3:(CHRNB2)2 and (CHRNA4)2:(CHRNB2)3, the two stoichiometric forms differ in their unitary conductance, calcium permeability, ACh sensitivity and potentiation by divalent cation. Involved in the modulation of calcium-dependent signaling pathways, influences the release of neurotransmitters, including dopamine, glutamate and GABA. In Rattus norvegicus (Rat), this protein is Neuronal acetylcholine receptor subunit alpha-4 (Chrna4).